Reading from the N-terminus, the 616-residue chain is 1-deoxy-D-xylulose-5-phosphate synthase (616 aa).

Residues H74 and 115 to 117 each bind thiamine diphosphate; that span reads GHS. Residue D146 coordinates Mg(2+). Residues 147 to 148, N175, Y282, and E365 each bind thiamine diphosphate; that span reads GA. N175 is a Mg(2+) binding site.

The protein belongs to the transketolase family. DXPS subfamily. Homodimer. Requires Mg(2+) as cofactor. Thiamine diphosphate serves as cofactor.

The enzyme catalyses D-glyceraldehyde 3-phosphate + pyruvate + H(+) = 1-deoxy-D-xylulose 5-phosphate + CO2. It participates in metabolic intermediate biosynthesis; 1-deoxy-D-xylulose 5-phosphate biosynthesis; 1-deoxy-D-xylulose 5-phosphate from D-glyceraldehyde 3-phosphate and pyruvate: step 1/1. Catalyzes the acyloin condensation reaction between C atoms 2 and 3 of pyruvate and glyceraldehyde 3-phosphate to yield 1-deoxy-D-xylulose-5-phosphate (DXP). In Chromobacterium violaceum (strain ATCC 12472 / DSM 30191 / JCM 1249 / CCUG 213 / NBRC 12614 / NCIMB 9131 / NCTC 9757 / MK), this protein is 1-deoxy-D-xylulose-5-phosphate synthase.